Consider the following 246-residue polypeptide: Ribonuclease PH (246 aa).

Phosphate is bound by residues R91 and 129–131; that span reads GTR.

The protein belongs to the RNase PH family. In terms of assembly, homohexameric ring arranged as a trimer of dimers.

It carries out the reaction tRNA(n+1) + phosphate = tRNA(n) + a ribonucleoside 5'-diphosphate. Its function is as follows. Phosphorolytic 3'-5' exoribonuclease that plays an important role in tRNA 3'-end maturation. Removes nucleotide residues following the 3'-CCA terminus of tRNAs; can also add nucleotides to the ends of RNA molecules by using nucleoside diphosphates as substrates, but this may not be physiologically important. Probably plays a role in initiation of 16S rRNA degradation (leading to ribosome degradation) during starvation. This is Ribonuclease PH from Burkholderia ambifaria (strain MC40-6).